Here is a 209-residue protein sequence, read N- to C-terminus: D-aminoacyl-tRNA deacylase 1 (209 aa).

Positions 4, 6, and 28 each coordinate Mg(2+). The short motif at 139 to 140 is the Gly-cisPro motif, important for rejection of L-amino acids element; the sequence is GP. Positions 142–209 are disordered; that stretch reads TIELESPAPG…EGDVSSEREP (68 aa). Basic and acidic residues-rich tracts occupy residues 159–170 and 181–194; these read QLSKLEKQQQRK and SSKERSAPRKEDRS. 3 positions are modified to phosphoserine: S197, S204, and S205.

Belongs to the DTD family. Homodimer. Interacts with CDC45 and TOPBP1. Post-translationally, preferentially phosphorylated in cells arrested early in S phase. Phosphorylation in the C-terminus weakens the interaction with CDC45.

It is found in the nucleus. The protein resides in the cytoplasm. It catalyses the reaction glycyl-tRNA(Ala) + H2O = tRNA(Ala) + glycine + H(+). The enzyme catalyses a D-aminoacyl-tRNA + H2O = a tRNA + a D-alpha-amino acid + H(+). Its function is as follows. An aminoacyl-tRNA editing enzyme that deacylates mischarged D-aminoacyl-tRNAs. Also deacylates mischarged glycyl-tRNA(Ala), protecting cells against glycine mischarging by AlaRS. Acts via tRNA-based rather than protein-based catalysis; rejects L-amino acids rather than detecting D-amino acids in the active site. By recycling D-aminoacyl-tRNA to D-amino acids and free tRNA molecules, this enzyme counteracts the toxicity associated with the formation of D-aminoacyl-tRNA entities in vivo and helps enforce protein L-homochirality. ATPase involved in DNA replication, may facilitate loading of CDC45 onto pre-replication complexes. The sequence is that of D-aminoacyl-tRNA deacylase 1 (DTD1) from Bos taurus (Bovine).